The following is a 103-amino-acid chain: Pro-corazonin (103 aa).

Residues 1–19 form the signal peptide; it reads MSANVTLLLIFVTLASVTA. At Gln20 the chain carries Pyrrolidone carboxylic acid. Position 30 is an asparagine amide (Asn30). The propeptide occupies 34-103; that stretch reads DQGHLRPELK…NLNAMMDAFY (70 aa).

Expressed in corpora cardiaca (CC), corpora allata (CA), antennal lobe (AL) and gnathal ganglion (GNG) (at protein level). Expression in CC and CA detected in all animals, expression in AL and in GNG in some animals.

The protein resides in the secreted. Cardioactive peptide. Corazonin is probably involved in the physiological regulation of the heart beat. In Agrotis ipsilon (Black cutworm moth), this protein is Pro-corazonin.